Here is a 229-residue protein sequence, read N- to C-terminus: DNA mismatch repair protein MutH (229 aa).

It belongs to the MutH family.

Its subcellular location is the cytoplasm. Functionally, sequence-specific endonuclease that cleaves unmethylated GATC sequences. It is involved in DNA mismatch repair. The protein is DNA mismatch repair protein MutH of Shigella boydii serotype 18 (strain CDC 3083-94 / BS512).